The sequence spans 498 residues: Glycerol kinase (498 aa).

Position 14 (T14) interacts with ADP. ATP contacts are provided by T14, T15, and S16. Position 14 (T14) interacts with sn-glycerol 3-phosphate. Residue R18 coordinates ADP. Positions 84, 85, 136, and 243 each coordinate sn-glycerol 3-phosphate. Glycerol contacts are provided by R84, E85, Y136, D243, and Q244. Residues T265 and G308 each coordinate ADP. Positions 265, 308, 312, and 409 each coordinate ATP. Residues G409 and N413 each coordinate ADP.

Belongs to the FGGY kinase family.

It carries out the reaction glycerol + ATP = sn-glycerol 3-phosphate + ADP + H(+). It participates in polyol metabolism; glycerol degradation via glycerol kinase pathway; sn-glycerol 3-phosphate from glycerol: step 1/1. Its activity is regulated as follows. Inhibited by fructose 1,6-bisphosphate (FBP). In terms of biological role, key enzyme in the regulation of glycerol uptake and metabolism. Catalyzes the phosphorylation of glycerol to yield sn-glycerol 3-phosphate. In Shewanella frigidimarina (strain NCIMB 400), this protein is Glycerol kinase.